A 251-amino-acid polypeptide reads, in one-letter code: Adenosylcobinamide-GDP ribazoletransferase (251 aa).

A run of 5 helical transmembrane segments spans residues 44 to 64, 114 to 134, 143 to 163, 177 to 197, and 198 to 218; these read LVGL…LLAG, IGAF…VLAH, GALV…AACV, AGAT…TGVA, and LAGP…VVWL.

Belongs to the CobS family. The cofactor is Mg(2+).

The protein localises to the cell inner membrane. It carries out the reaction alpha-ribazole + adenosylcob(III)inamide-GDP = adenosylcob(III)alamin + GMP + H(+). The enzyme catalyses alpha-ribazole 5'-phosphate + adenosylcob(III)inamide-GDP = adenosylcob(III)alamin 5'-phosphate + GMP + H(+). The protein operates within cofactor biosynthesis; adenosylcobalamin biosynthesis; adenosylcobalamin from cob(II)yrinate a,c-diamide: step 7/7. Joins adenosylcobinamide-GDP and alpha-ribazole to generate adenosylcobalamin (Ado-cobalamin). Also synthesizes adenosylcobalamin 5'-phosphate from adenosylcobinamide-GDP and alpha-ribazole 5'-phosphate. The protein is Adenosylcobinamide-GDP ribazoletransferase of Nitratidesulfovibrio vulgaris (strain DSM 19637 / Miyazaki F) (Desulfovibrio vulgaris).